The primary structure comprises 87 residues: U3-theraphotoxin-Hhn1g (87 aa).

Residues 1-24 form the signal peptide; it reads MVNMKASMFLTFAGLVLLFVVCFA. The propeptide occupies 25–52; sequence SESEEKEFPKEMLSSIFAVDNDFKQEER. 3 disulfide bridges follow: C54-C67, C61-C72, and C66-C79.

This sequence belongs to the neurotoxin 10 (Hwtx-1) family. 51 (Hntx-8) subfamily. Hntx-8 sub-subfamily. As to expression, expressed by the venom gland.

The protein resides in the secreted. In terms of biological role, ion channel inhibitor. The polypeptide is U3-theraphotoxin-Hhn1g (Cyriopagopus hainanus (Chinese bird spider)).